The primary structure comprises 606 residues: Zinc finger protein 214 (606 aa).

The KRAB domain occupies 3-83 (VTFEDVTIIF…GAQMYENQNY (81 aa)). The segment at 275 to 297 (YGCDEVDGNFHQSSGVHFHQRVH) adopts a C2H2-type 1; degenerate zinc-finger fold. The C2H2-type 2 zinc finger occupies 303–325 (YSCNACGKSFSQISSLHNHQRVH). The C2H2-type 3; degenerate zinc finger occupies 330-352 (FYKIECDKDLSRNSLLHIHQRLH). 8 C2H2-type zinc fingers span residues 358–380 (FKCN…QRVH), 386–408 (YKCD…QLVH), 414–436 (YKCE…QRVH), 442–464 (YKCD…QRVH), 470–492 (YTCP…QRVH), 498–520 (YKCE…QRVH), 526–548 (YKCH…QRVH), and 554–576 (YQCA…QRVH).

It belongs to the krueppel C2H2-type zinc-finger protein family.

The protein localises to the nucleus. Its function is as follows. May be involved in transcriptional regulation. This Homo sapiens (Human) protein is Zinc finger protein 214 (ZNF214).